The following is a 134-amino-acid chain: MARVKRGVTAHAKHKKVLKAAKGFYGRRKNTIRAAKAAVDRSKQYAYRDRKVNKRNFRALWIQRINAAVREFGLTYGRFIDGLNKAGIEVDRKVLSDMAIHEPEAFGALVNAAKKALEYLKETGTANEFEGAVR.

The protein belongs to the bacterial ribosomal protein bL20 family.

Its function is as follows. Binds directly to 23S ribosomal RNA and is necessary for the in vitro assembly process of the 50S ribosomal subunit. It is not involved in the protein synthesizing functions of that subunit. The protein is Large ribosomal subunit protein bL20 of Rhizobium etli (strain CIAT 652).